The chain runs to 551 residues: Calnexin (551 aa).

An N-terminal signal peptide occupies residues Met-1 to Ala-23. The Lumenal portion of the chain corresponds to Asp-24 to Ala-477. The tract at residues Glu-293–Asp-315 is disordered. A helical membrane pass occupies residues Ala-478–Ile-498. The Cytoplasmic portion of the chain corresponds to Gly-499 to Glu-551. The disordered stretch occupies residues Lys-526–Glu-551.

This sequence belongs to the calreticulin family.

Its subcellular location is the endoplasmic reticulum membrane. In terms of biological role, endoplasmic reticulum (ER) chaperone that functions to stabilize non-native glycoproteins and retain them in the ER until they are properly folded or targeted for ER associated degradation (ERAD). With co-chaperone DNJ1, coordinately maintains ER homeostasis and contributes to maintenance of cell wall architecture. This Cryptococcus neoformans var. grubii serotype A (strain H99 / ATCC 208821 / CBS 10515 / FGSC 9487) (Filobasidiella neoformans var. grubii) protein is Calnexin.